The sequence spans 264 residues: Mitochondrial distribution and morphology protein 12 (264 aa).

In terms of domain architecture, SMP-LTD spans methionine 1–asparagine 232. The interval glutamate 240–alanine 264 is disordered. The segment covering serine 248–alanine 264 has biased composition (basic and acidic residues).

This sequence belongs to the MDM12 family. As to quaternary structure, component of the ER-mitochondria encounter structure (ERMES) or MDM complex, composed of MMM1, MDM10, MDM12 and MDM34. An MMM1 homodimer associates with one molecule of MDM12 on each side in a pairwise head-to-tail manner, and the SMP-LTD domains of MMM1 and MDM12 generate a continuous hydrophobic tunnel for phospholipid trafficking.

The protein resides in the mitochondrion outer membrane. It localises to the endoplasmic reticulum membrane. In terms of biological role, component of the ERMES/MDM complex, which serves as a molecular tether to connect the endoplasmic reticulum (ER) and mitochondria. Components of this complex are involved in the control of mitochondrial shape and protein biogenesis, and function in nonvesicular lipid trafficking between the ER and mitochondria. MDM12 is required for the interaction of the ER-resident membrane protein MMM1 and the outer mitochondrial membrane-resident beta-barrel protein MDM10. The MDM12-MMM1 subcomplex functions in the major beta-barrel assembly pathway that is responsible for biogenesis of all mitochondrial outer membrane beta-barrel proteins, and acts in a late step after the SAM complex. The MDM10-MDM12-MMM1 subcomplex further acts in the TOM40-specific pathway after the action of the MDM12-MMM1 complex. Essential for establishing and maintaining the structure of mitochondria and maintenance of mtDNA nucleoids. The protein is Mitochondrial distribution and morphology protein 12 of Eremothecium gossypii (strain ATCC 10895 / CBS 109.51 / FGSC 9923 / NRRL Y-1056) (Yeast).